The sequence spans 249 residues: tRNA pseudouridine synthase A (249 aa).

Residue Asp52 is the Nucleophile of the active site. Residue Tyr110 coordinates substrate.

It belongs to the tRNA pseudouridine synthase TruA family. In terms of assembly, homodimer.

The catalysed reaction is uridine(38/39/40) in tRNA = pseudouridine(38/39/40) in tRNA. Functionally, formation of pseudouridine at positions 38, 39 and 40 in the anticodon stem and loop of transfer RNAs. The polypeptide is tRNA pseudouridine synthase A (Azobacteroides pseudotrichonymphae genomovar. CFP2).